The sequence spans 141 residues: Large ribosomal subunit protein uL11 (141 aa).

This sequence belongs to the universal ribosomal protein uL11 family. As to quaternary structure, part of the ribosomal stalk of the 50S ribosomal subunit. Interacts with L10 and the large rRNA to form the base of the stalk. L10 forms an elongated spine to which L12 dimers bind in a sequential fashion forming a multimeric L10(L12)X complex. Post-translationally, one or more lysine residues are methylated.

In terms of biological role, forms part of the ribosomal stalk which helps the ribosome interact with GTP-bound translation factors. The protein is Large ribosomal subunit protein uL11 of Streptococcus thermophilus (strain CNRZ 1066).